The following is a 499-amino-acid chain: MSVTVSSPAGRSFHISRSPYKKISKPRVIIAAVRSGVSLAVAPILTKLQKDCATPLPVLRHVADAMAVDMRAGLAVDGGSDLKMILSYIDTLPTGNEKGLFYALDLGGTNFRVLRVQLGGKEERVIATEFEQVSIPQELMFATSEELFDFIASELGKFSQSEGGKFEMQQGRTREIGFTFSFPVKQTSVKSGILIKWTKGFAVSGTAGKDVVACLNEAMERQGLGMQVSALVNDTVATLAGARYWDNDVMVAVILGTGTNACYVERVDAIPKLPQRMSNSPETIVNTEWGAFSNGLPLTEFDREMDAESINPGEQIFEKTISGMYLGEIVRRVLVKMAKVGGLFGGGYVPEKLVTPFVLRTPDICAMQQDTSRDLEAVESVLYDIAGVKSDLSARKTVVDICDTIANRGGRLAGAGIVGILQKMEEDSKGVIFGKRTVVAMDGGLYEHYPQYREYLQEAVTELLGSEISKNVVIEHSKDGSGIGAALLAAANSKYEHDY.

A chloroplast-targeting transit peptide spans 1 to 30 (MSVTVSSPAGRSFHISRSPYKKISKPRVII). Positions 39–490 (LAVAPILTKL…SGIGAALLAA (452 aa)) constitute a Hexokinase domain. The interval 94–232 (TGNEKGLFYA…GLGMQVSALV (139 aa)) is hexokinase small subdomain. ADP-binding residues include glycine 108, threonine 109, and asparagine 110. 4 residues coordinate D-glucose: threonine 198, lysine 199, asparagine 233, and aspartate 234. Residues 233–479 (NDTVATLAGA…KNVVIEHSKD (247 aa)) form a hexokinase large subdomain region. Position 257 (threonine 257) interacts with ADP. Residues asparagine 260, glutamate 288, and glutamate 318 each coordinate D-glucose. Position 444 (glycine 444) interacts with ADP.

Belongs to the hexokinase family. As to expression, expressed in vascular starch sheath, xylem parenchyma, guard cells and root tips.

It is found in the plastid. It localises to the chloroplast stroma. It catalyses the reaction a D-hexose + ATP = a D-hexose 6-phosphate + ADP + H(+). The catalysed reaction is D-fructose + ATP = D-fructose 6-phosphate + ADP + H(+). It carries out the reaction D-glucose + ATP = D-glucose 6-phosphate + ADP + H(+). The protein operates within carbohydrate metabolism; hexose metabolism. Its pathway is carbohydrate degradation; glycolysis; D-glyceraldehyde 3-phosphate and glycerone phosphate from D-glucose: step 1/4. Functionally, fructose and glucose phosphorylating enzyme. The polypeptide is Hexokinase-2, chloroplastic (HXK2) (Nicotiana tabacum (Common tobacco)).